A 987-amino-acid chain; its full sequence is UPF0182 protein DIP0733 (987 aa).

Helical transmembrane passes span 19–39, 63–83, 115–135, 176–196, 212–234, 261–281, and 290–310; these read LTWL…VVDL, IGLF…AGWF, FLVV…QQAW, SVLL…LGGI, YAKV…SYWL, AKIV…SVIV, and ISTV…PIMM. Residues 904–927 show a composition bias toward basic and acidic residues; that stretch reads DLGEAKGLKPESQNRDKPEDKEGK. A disordered region spans residues 904-950; it reads DLGEAKGLKPESQNRDKPEDKEGKAPSTPSAPASGSGTTGEAIGKIN. Residues 928 to 943 are compositionally biased toward low complexity; the sequence is APSTPSAPASGSGTTG.

The protein belongs to the UPF0182 family.

Its subcellular location is the cell membrane. This is UPF0182 protein DIP0733 from Corynebacterium diphtheriae (strain ATCC 700971 / NCTC 13129 / Biotype gravis).